The primary structure comprises 195 residues: Thymidine kinase (195 aa).

ATP is bound by residues 15–22 (GSMFSGKS) and 88–91 (DEVQ). The active-site Proton acceptor is the glutamate 89. 4 residues coordinate Zn(2+): cysteine 145, cysteine 148, cysteine 183, and cysteine 186.

Belongs to the thymidine kinase family. Homotetramer.

Its subcellular location is the cytoplasm. The catalysed reaction is thymidine + ATP = dTMP + ADP + H(+). The polypeptide is Thymidine kinase (Bacillus cereus (strain AH187)).